The following is a 90-amino-acid chain: MFTIDLSIKNTAFPITVQRKTAEDAEAVYQLILAAIRSGNPDIVELKCEGKTEKKIAVRASEISGVQITQKDGVTTSSGRAPGFFALAGE.

The protein belongs to the UPF0367 family.

In Trichormus variabilis (strain ATCC 29413 / PCC 7937) (Anabaena variabilis), this protein is UPF0367 protein Ava_2513.